The following is a 183-amino-acid chain: Small ribosomal subunit protein bS16 (183 aa).

Residues 149-161 (EKKAAEAAAKAEA) are compositionally biased toward basic and acidic residues. Positions 149-183 (EKKAAEAAAKAEAEAANAPAEEAPAAEATEAPAEA) are disordered. Residues 162 to 183 (EAANAPAEEAPAAEATEAPAEA) show a composition bias toward low complexity.

This sequence belongs to the bacterial ribosomal protein bS16 family.

The polypeptide is Small ribosomal subunit protein bS16 (Phocaeicola vulgatus (strain ATCC 8482 / DSM 1447 / JCM 5826 / CCUG 4940 / NBRC 14291 / NCTC 11154) (Bacteroides vulgatus)).